Reading from the N-terminus, the 388-residue chain is MKHLHRFFSSDASGGIILIIAAILAMMMANSGATSGWYHDFLETPVQLRVGSLEINKNMLLWINDALMAVFFLLVGLEVKRELMQGSLASLRQAAFPVIAAIGGMIVPALLYLAFNYADPITREGWAIPAATDIAFALGVLALLGSRVPLALKIFLMALAIIDDLGAIIIIALFYTNDLSMASLGVAAVAIAVLAVLNLCGVRRTGVYILVGVVLWTAVLKSGVHATLAGVIVGFFIPLKEKHGRSPAKRLEHVLHPWVAYLILPLFAFANAGVSLQGVTLDGLTSILPLGIIAGLLIGKPLGISLFCWLALRLKLAHLPEGTTYQQIMAVGILCGIGFTMSIFIASLAFGSVDPELINWAKLGILVGSISSAVIGYSWLRVRLRPSV.

The Cytoplasmic segment spans residues 1–11 (MKHLHRFFSSD). A helical membrane pass occupies residues 12–31 (ASGGIILIIAAILAMMMANS). The Periplasmic portion of the chain corresponds to 32-58 (GATSGWYHDFLETPVQLRVGSLEINKN). A helical membrane pass occupies residues 59–80 (MLLWINDALMAVFFLLVGLEVK). Over 81–96 (RELMQGSLASLRQAAF) the chain is Cytoplasmic. A helical membrane pass occupies residues 97 to 116 (PVIAAIGGMIVPALLYLAFN). Topologically, residues 117 to 122 (YADPIT) are periplasmic. The helical transmembrane segment at 123–130 (REGWAIPA) threads the bilayer. The Cytoplasmic portion of the chain corresponds to 131–154 (ATDIAFALGVLALLGSRVPLALKI). Residues 155-176 (FLMALAIIDDLGAIIIIALFYT) traverse the membrane as a helical segment. Residues 177 to 180 (NDLS) lie on the Periplasmic side of the membrane. A helical membrane pass occupies residues 181–200 (MASLGVAAVAIAVLAVLNLC). Topologically, residues 201 to 204 (GVRR) are cytoplasmic. The chain crosses the membrane as a helical span at residues 205–222 (TGVYILVGVVLWTAVLKS). Position 223 (Gly223) is a topological domain, periplasmic. The helical transmembrane segment at 224 to 236 (VHATLAGVIVGFF) threads the bilayer. Topologically, residues 237-253 (IPLKEKHGRSPAKRLEH) are cytoplasmic. A helical transmembrane segment spans residues 254–272 (VLHPWVAYLILPLFAFANA). Topologically, residues 273–286 (GVSLQGVTLDGLTS) are periplasmic. Residues 287–310 (ILPLGIIAGLLIGKPLGISLFCWL) traverse the membrane as a helical segment. Residues 311-339 (ALRLKLAHLPEGTTYQQIMAVGILCGIGF) are Cytoplasmic-facing. Residues 340–350 (TMSIFIASLAF) traverse the membrane as a helical segment. Residues 351–357 (GSVDPEL) lie on the Periplasmic side of the membrane. A helical transmembrane segment spans residues 358 to 380 (INWAKLGILVGSISSAVIGYSWL). At 381–388 (RVRLRPSV) the chain is on the cytoplasmic side.

The protein belongs to the NhaA Na(+)/H(+) (TC 2.A.33) antiporter family.

It is found in the cell inner membrane. It carries out the reaction Na(+)(in) + 2 H(+)(out) = Na(+)(out) + 2 H(+)(in). Functionally, na(+)/H(+) antiporter that extrudes sodium in exchange for external protons. This Shigella boydii serotype 4 (strain Sb227) protein is Na(+)/H(+) antiporter NhaA.